The following is a 249-amino-acid chain: General transcription factor IIF subunit 2 (249 aa).

Ala-2 bears the N-acetylalanine mark. Residues Lys-22, Lys-33, and Lys-137 each carry the N6-acetyllysine modification. Ser-142 bears the Phosphoserine mark. Residues Gly-227 and His-229 each coordinate DNA. Position 248 is a phosphoserine (Ser-248).

This sequence belongs to the TFIIF beta subunit family. In terms of assembly, heterodimer of an alpha and a beta subunit. Interacts with HTATSF1 and GPBP1. Interacts with URI1. Interacts with GTF2B (via N-terminus); this interaction is inhibited in presence of GTF2F1. Part of TBP-based Pol II pre-initiation complex (PIC), in which Pol II core assembles with general transcription factors and other specific initiation factors including GTF2E1, GTF2E2, GTF2F1, GTF2F2, TCEA1, ERCC2, ERCC3, GTF2H2, GTF2H3, GTF2H4, GTF2H5, GTF2A1, GTF2A2, GTF2B and TBP; this large multi-subunit PIC complex mediates DNA unwinding and targets Pol II core to the transcription start site where the first phosphodiester bond forms.

The protein resides in the nucleus. In terms of biological role, TFIIF is a general transcription initiation factor that binds to RNA polymerase II and helps to recruit it to the initiation complex in collaboration with TFIIB. It promotes transcription elongation. This is General transcription factor IIF subunit 2 (Gtf2f2) from Rattus norvegicus (Rat).